We begin with the raw amino-acid sequence, 394 residues long: Flavin-dependent monooxygenase, oxygenase subunit HsaA (394 aa).

Residues W84, S118–Y120, W141–S143, R263, A346–T347, and H368–A369 contribute to the FMN site.

This sequence belongs to the HpaH/HsaA monooxygenase family. Homotetramer under anaerobic conditions. HsaAB monooxygenase consists of an oxygenase component HsaA and a reductase component HsaB.

The enzyme catalyses 3-hydroxy-9,10-secoandrosta-1,3,5(10)-triene-9,17-dione + FMNH2 + O2 = 3,4-dihydroxy-9,10-secoandrosta-1,3,5(10)-triene-9,17-dione + FMN + H2O + H(+). The protein operates within lipid metabolism; steroid biosynthesis. Its function is as follows. Catalyzes the o-hydroxylation of 3-hydroxy-9,10-secoandrosta-1,3,5(10)-triene-9,17-dione (3-HSA) to 3,4-dihydroxy-9,10-secoandrosta-1,3,5(10)-triene-9,17-dione (3,4-DHSA) in the catabolism of cholesterol. This is Flavin-dependent monooxygenase, oxygenase subunit HsaA from Mycobacterium tuberculosis (strain CDC 1551 / Oshkosh).